Here is a 231-residue protein sequence, read N- to C-terminus: NDR1/HIN1-like protein 3 (231 aa).

The helical transmembrane segment at valine 47 to tryptophan 67 threads the bilayer. Asparagine 102, asparagine 135, asparagine 145, and asparagine 215 each carry an N-linked (GlcNAc...) asparagine glycan.

May form oligomers or be a component of larger protein complex in plasma membranes. Glycosylated. In terms of tissue distribution, expressed in roots, young and senescing leaves, cauline leaves, stems and siliques.

It localises to the cell membrane. Functionally, confers resistance to Pseudomonas syringae pv. tomato DC3000 (Pst DC3000). This chain is NDR1/HIN1-like protein 3, found in Arabidopsis thaliana (Mouse-ear cress).